The sequence spans 201 residues: Putative ankyrin repeat protein R868 (201 aa).

ANK repeat units follow at residues 125–154 (YENNALNWASKYGFLEIVKLIMENKINCYF) and 156–188 (KAKKAYQLAITYGHTDVVDFLKTYVNTNSDYNF).

This Acanthamoeba polyphaga (Amoeba) protein is Putative ankyrin repeat protein R868.